The sequence spans 159 residues: MADPGIVMVGIGDCAIARCPVKIKTSGLGSCVGVTIYDRHEKIGGLLHTMLPNIKKAGIKDNPTKFTDAGIEYLVAEIIENGGSRRKLEAKLVGGSSMFENSHMNIGERNIKSAKETLKKLGLEIIAEDTGKNYGRTIIFDTLTGDLLIKTMLRGDKVI.

This sequence belongs to the CheD family.

It carries out the reaction L-glutaminyl-[protein] + H2O = L-glutamyl-[protein] + NH4(+). In terms of biological role, probably deamidates glutamine residues to glutamate on methyl-accepting chemotaxis receptors (MCPs), playing an important role in chemotaxis. This Methanosarcina acetivorans (strain ATCC 35395 / DSM 2834 / JCM 12185 / C2A) protein is Probable chemoreceptor glutamine deamidase CheD 1.